The chain runs to 294 residues: tRNA dimethylallyltransferase (294 aa).

10-17 (GPTAVGKT) provides a ligand contact to ATP. 12-17 (TAVGKT) contacts substrate. Positions 35 to 38 (DSQQ) are interaction with substrate tRNA.

Belongs to the IPP transferase family. In terms of assembly, monomer. The cofactor is Mg(2+).

The enzyme catalyses adenosine(37) in tRNA + dimethylallyl diphosphate = N(6)-dimethylallyladenosine(37) in tRNA + diphosphate. Its function is as follows. Catalyzes the transfer of a dimethylallyl group onto the adenine at position 37 in tRNAs that read codons beginning with uridine, leading to the formation of N6-(dimethylallyl)adenosine (i(6)A). The chain is tRNA dimethylallyltransferase from Streptococcus suis (strain 05ZYH33).